We begin with the raw amino-acid sequence, 252 residues long: tRNA (guanine-N(1)-)-methyltransferase (252 aa).

S-adenosyl-L-methionine-binding positions include G113 and 133–138; that span reads LGDYVL.

The protein belongs to the RNA methyltransferase TrmD family. As to quaternary structure, homodimer.

It is found in the cytoplasm. The enzyme catalyses guanosine(37) in tRNA + S-adenosyl-L-methionine = N(1)-methylguanosine(37) in tRNA + S-adenosyl-L-homocysteine + H(+). Its function is as follows. Specifically methylates guanosine-37 in various tRNAs. The chain is tRNA (guanine-N(1)-)-methyltransferase from Stenotrophomonas maltophilia (strain R551-3).